Consider the following 201-residue polypeptide: E3 ubiquitin-protein ligase MIR1 (201 aa).

The RING-CH-type zinc-finger motif lies at 1-58; it reads MDSTGEFCWICHQPEGPLKRFCGCKGSCAVSHQDCLRGWLETSRRQTCALCGTPYSMK. Residues 1–81 lie on the Cytoplasmic side of the membrane; sequence MDSTGEFCWI…EEVLAAMEAC (81 aa). Residues Cys8, Cys11, Cys22, Cys24, His32, Cys35, Cys48, and Cys51 each contribute to the Zn(2+) site. Residues 52–79 form a DIRT region; it reads GTPYSMKWKTKPLREWTWGEEEVLAAME. The chain crosses the membrane as a helical span at residues 82-102; the sequence is LPLVLIPLAVLMIVMGTWLLV. The Extracellular portion of the chain corresponds to 103 to 113; that stretch reads NHNGFLSPRMQ. The helical transmembrane segment at 114–134 threads the bilayer; sequence VVLVVIVLLAMIVFSASASYV. The Cytoplasmic portion of the chain corresponds to 135–201; that stretch reads MVEGPGCLDT…RLGCVRLCCV (67 aa).

As to quaternary structure, interacts with host UBE2J2.

Its subcellular location is the host endoplasmic reticulum membrane. The enzyme catalyses [E2 ubiquitin-conjugating enzyme]-S-ubiquitinyl-L-cysteine + [acceptor protein]-L-cysteine = [E2 ubiquitin-conjugating enzyme]-L-cysteine + [acceptor protein]-S-ubiquitinyl-L-cysteine.. Its pathway is protein modification; protein ubiquitination. Functionally, E3 ubiquitin-protein ligase that mediates ubiquitination of host surface class I (MHC-I) H-2D(b)/H2-D1 and H-2K(b)/H2-K1 molecules before they exit the endoplasmic reticulum, leading to their degradation by the endoplasmic reticulum-associated degradation (ERAD) system, thus blocking the immune detection of virus-infected cells. Mediates ubiquitination of lysine, as well as serine and threonine residues present in the cytoplasmic tail of surface class I molecules. Promotes ubiquitination of hydroxylated serine or threonine residues via ester bonds instead of the classical isopeptide linkage. The protein is E3 ubiquitin-protein ligase MIR1 (K3) of Murid herpesvirus 4 (MuHV-4).